The primary structure comprises 253 residues: Proteasome subunit alpha type-3 (253 aa).

The segment at 230 to 253 (ELTEKARKAGDAANKDEDSDNETH) is disordered. The span at 231 to 253 (LTEKARKAGDAANKDEDSDNETH) shows a compositional bias: basic and acidic residues. Phosphoserine is present on Ser-248.

The protein belongs to the peptidase T1A family. In terms of assembly, the 26S proteasome consists of a 20S proteasome core and two 19S regulatory subunits. The 20S proteasome core is composed of 28 subunits that are arranged in four stacked rings, resulting in a barrel-shaped structure. The two end rings are each formed by seven alpha subunits, and the two central rings are each formed by seven beta subunits. The catalytic chamber with the active sites is on the inside of the barrel. Interacts with ntc.

The protein resides in the cytoplasm. It localises to the nucleus. Functionally, the proteasome is a multicatalytic proteinase complex which is characterized by its ability to cleave peptides with Arg, Phe, Tyr, Leu, and Glu adjacent to the leaving group at neutral or slightly basic pH. The proteasome has an ATP-dependent proteolytic activity. The sequence is that of Proteasome subunit alpha type-3 (Prosalpha7) from Drosophila melanogaster (Fruit fly).